The following is a 331-amino-acid chain: tRNA U34 carboxymethyltransferase (331 aa).

Carboxy-S-adenosyl-L-methionine-binding positions include K91, W105, K110, G130, 152–154, 181–182, M196, Y200, and R315; these read DPS and IE.

The protein belongs to the class I-like SAM-binding methyltransferase superfamily. CmoB family. As to quaternary structure, homotetramer.

The enzyme catalyses carboxy-S-adenosyl-L-methionine + 5-hydroxyuridine(34) in tRNA = 5-carboxymethoxyuridine(34) in tRNA + S-adenosyl-L-homocysteine + H(+). Catalyzes carboxymethyl transfer from carboxy-S-adenosyl-L-methionine (Cx-SAM) to 5-hydroxyuridine (ho5U) to form 5-carboxymethoxyuridine (cmo5U) at position 34 in tRNAs. This Shewanella baltica (strain OS185) protein is tRNA U34 carboxymethyltransferase.